The following is a 379-amino-acid chain: tRNA-specific 2-thiouridylase MnmA (379 aa).

ATP is bound by residues 9–16 (AMSGGVDS) and Met35. Positions 94 to 96 (NPD) are interaction with target base in tRNA. Cys99 functions as the Nucleophile in the catalytic mechanism. A disulfide bond links Cys99 and Cys195. Residue Gly123 participates in ATP binding. The segment at 145 to 147 (KDQ) is interaction with tRNA. The active-site Cysteine persulfide intermediate is Cys195. Residues 307–308 (RY) form an interaction with tRNA region.

It belongs to the MnmA/TRMU family.

Its subcellular location is the cytoplasm. The catalysed reaction is S-sulfanyl-L-cysteinyl-[protein] + uridine(34) in tRNA + AH2 + ATP = 2-thiouridine(34) in tRNA + L-cysteinyl-[protein] + A + AMP + diphosphate + H(+). Its function is as follows. Catalyzes the 2-thiolation of uridine at the wobble position (U34) of tRNA, leading to the formation of s(2)U34. The sequence is that of tRNA-specific 2-thiouridylase MnmA from Xylella fastidiosa (strain 9a5c).